Consider the following 192-residue polypeptide: Ion-translocating oxidoreductase complex subunit B (192 aa).

Residues 1–26 (MNTIWIAVGALTLLGLVFGAILGYAS) are hydrophobic. In terms of domain architecture, 4Fe-4S spans 32–91 (EDDPVVEKIDAILPQSQCGQCGYPGCRPYAEAVGLQGEKINRCAPGGEAVMLKMAELLNV). Cys-49, Cys-52, Cys-57, Cys-74, Cys-117, Cys-120, Cys-123, Cys-127, Cys-147, Cys-150, Cys-153, and Cys-157 together coordinate [4Fe-4S] cluster. 4Fe-4S ferredoxin-type domains lie at 108–137 (MLAVIDENNCIGCTKCIQACPVDAIVGATR) and 138–167 (AMHTVMSDLCTGCNLCVDPCPTHCIELRPV).

This sequence belongs to the 4Fe4S bacterial-type ferredoxin family. RnfB subfamily. The complex is composed of six subunits: RsxA, RsxB, RsxC, RsxD, RsxE and RsxG. The cofactor is [4Fe-4S] cluster.

The protein resides in the cell inner membrane. Part of a membrane-bound complex that couples electron transfer with translocation of ions across the membrane. Required to maintain the reduced state of SoxR. The polypeptide is Ion-translocating oxidoreductase complex subunit B (Salmonella agona (strain SL483)).